We begin with the raw amino-acid sequence, 103 residues long: N(4)-acetylcytidine amidohydrolase (103 aa).

One can recognise an ASCH domain in the interval 6–101 (ITFFQRFQDD…QTQFYVIEFK (96 aa)). K21 acts as the Proton acceptor in catalysis. The active-site Nucleophile is T24. E74 (proton donor) is an active-site residue.

This sequence belongs to the N(4)-acetylcytidine amidohydrolase family.

It catalyses the reaction N(4)-acetylcytidine + H2O = cytidine + acetate + H(+). The enzyme catalyses N(4)-acetyl-2'-deoxycytidine + H2O = 2'-deoxycytidine + acetate + H(+). The catalysed reaction is N(4)-acetylcytosine + H2O = cytosine + acetate + H(+). Its function is as follows. Catalyzes the hydrolysis of N(4)-acetylcytidine (ac4C). This chain is N(4)-acetylcytidine amidohydrolase (yqfB), found in Escherichia coli O81 (strain ED1a).